The chain runs to 653 residues: Putative clathrin assembly protein At2g25430 (653 aa).

Residues 23-159 (VASNMAPDLE…ELALFERKSG (137 aa)) form the ENTH domain. The span at 160-171 (VSVNSGGNSSHH) shows a compositional bias: low complexity. Positions 160-240 (VSVNSGGNSS…GGGGGGRDEK (81 aa)) are disordered. Positions 172–186 (SNNDDRYGRGRDDFR) are enriched in basic and acidic residues. A compositionally biased stretch (gly residues) spans 197–214 (NGGGGGSDFRGDNNGYGG). The residue at position 221 (S221) is a Phosphoserine. T244 is subject to Phosphothreonine. The span at 376–389 (RAKRGKSPERKEIE) shows a compositional bias: basic and acidic residues. The segment at 376–431 (RAKRGKSPERKEIEAPPPVVEEEEPEPDMNEIKALPPPENYTPPPPPEPEPQPEKP) is disordered. The segment covering 395 to 404 (VEEEEPEPDM) has biased composition (acidic residues). Pro residues predominate over residues 410 to 425 (LPPPENYTPPPPPEPE).

It is found in the membrane. Its subcellular location is the clathrin-coated pit. The protein resides in the golgi apparatus. It localises to the cytoplasmic vesicle. The protein localises to the clathrin-coated vesicle. The polypeptide is Putative clathrin assembly protein At2g25430 (Arabidopsis thaliana (Mouse-ear cress)).